A 352-amino-acid chain; its full sequence is Pre-rRNA-processing protein ipi1 (352 aa).

The protein belongs to the IPI1/TEX10 family. Component of the RIX1 complex, composed of rrm-9/ipi1, rix1/ipi2 and ipi3 in a 1:2:2 stoichiometry. The complex interacts (via rix1) with mdn1 (via its hexameric AAA ATPase ring) and the pre-60S ribosome particles.

The protein localises to the nucleus. In terms of biological role, component of the RIX1 complex required for processing of ITS2 sequences from 35S pre-rRNA. The polypeptide is Pre-rRNA-processing protein ipi1 (rrm-9) (Neurospora crassa (strain ATCC 24698 / 74-OR23-1A / CBS 708.71 / DSM 1257 / FGSC 987)).